The chain runs to 2566 residues: Zinc finger protein GLI1 (2566 aa).

Disordered regions lie at residues 349–375 (HHSS…SQSS), 430–508 (DIRR…RSTG), and 985–1046 (KSIE…GDPD). Composition is skewed to polar residues over residues 434–444 (TLSSNGNSSHT) and 457–492 (WSPN…YQQH). Residues 493-508 (SGYTSTSGSSGNRSTG) are compositionally biased toward low complexity. The span at 993 to 1016 (WQNQNVFSSRRNSTRDPSNNNNSG) shows a compositional bias: polar residues. Positions 1023–1035 (DEPDVDDDEELDD) are enriched in acidic residues. The segment at 1088–1110 (RECVRGTRPFKAQYMLVVHMRRH) adopts a C2H2-type 1; degenerate zinc-finger fold. 3 consecutive C2H2-type zinc fingers follow at residues 1116–1140 (HKCI…LRSH), 1146–1171 (YQCE…NRTH), and 1177–1202 (YTCK…KTVH). Disordered regions lie at residues 1254–1313 (GNSN…PRDS), 1465–1491 (LSTT…TKQK), 1650–1677 (SKNM…NQNE), 1727–1791 (AAAS…MDND), and 2067–2091 (MHFS…NRPH). 2 stretches are compositionally biased toward low complexity: residues 1661 to 1677 (NNNE…NQNE) and 1727 to 1743 (AAAS…TTAS). Positions 1752–1769 (NHHHQKQQPKHSHQHQNR) are enriched in basic residues. Residues 1770-1791 (TKSINSDNNYSNQDNVSTMDND) are compositionally biased toward polar residues. The segment covering 2070–2090 (SPHSYVHSSSSNSSPFNSNRP) has biased composition (low complexity).

The protein belongs to the GLI C2H2-type zinc-finger protein family. Expressed in female-paired or unpaired males along the ventral surface in neurons and skin tegument cells. In virgin and mature females, expressed bilaterally along the edges of the body in neurons. In mature females, also expressed in skin tegument cells.

The protein localises to the nucleus. Its function is as follows. Probable transcription factor which plays an essential role in males to trigger female sexual development by inducing NRPS expression in male. NRPS produces the pheromone beta-alanyl-tryptamine (BATT), which stimulates female sexual development. The protein is Zinc finger protein GLI1 of Schistosoma mansoni (Blood fluke).